Here is a 567-residue protein sequence, read N- to C-terminus: Interleukin-1 receptor-like 1 (567 aa).

The first 26 residues, 1 to 26 (MIDRQRMGLWALAILTLPMYLTVTEG), serve as a signal peptide directing secretion. 2 consecutive Ig-like C2-type domains span residues 27–109 (SKSS…LNVT) and 120–203 (PDYL…VTAT). At 27–332 (SKSSWGLENE…LRRKQPIDHR (306 aa)) the chain is on the extracellular side. A disulfide bridge links C42 with C93. N60, N101, N107, N146, N176, and N194 each carry an N-linked (GlcNAc...) asparagine glycan. 2 cysteine pairs are disulfide-bonded: C117/C157 and C139/C187. The interval 204-216 (RSFTVEEKGFSMF) is flexible linker. Residues 217 to 324 (PVITNPPYNH…GMIRHTIRLR (108 aa)) form the Ig-like C2-type 3 domain. Residues N225, N259, and N278 are each glycosylated (N-linked (GlcNAc...) asparagine). Cystine bridges form between C240–C308 and C243–C287. K326 is covalently cross-linked (Glycyl lysine isopeptide (Lys-Gly) (interchain with G-Cter in ubiquitin)). The chain crosses the membrane as a helical span at residues 333–355 (SIYYIVAGCSLLLMFINVLVIVL). Topologically, residues 356–567 (KVFWIEVALF…GKACLDLKHF (212 aa)) are cytoplasmic. Residues 380 to 540 (KLYDAYIIYP…KFWKHVRYQM (161 aa)) enclose the TIR domain. S442 carries the post-translational modification Phosphoserine; by GSK3-beta. Residue E466 is part of the active site.

The protein belongs to the interleukin-1 receptor family. In terms of assembly, interacts with MYD88, IRAK1, IRAK4, and TRAF6. Bound to its ligand IL33, interacts with IL1RAP to form the minimal interleukin-33 signaling complex with a 1:1:1 stoichiometry. Interacts with KIT (bound to KITLG/SCF). A mast cell-specific KITLG/SCF-induced interleukin-33 signaling complex contains IL1RL1, IL1RAP, KIT and MYD88. Interacts with TMED1. In terms of processing, phosphorylated by GSK3B at Ser-442; leading to proteasomal degradation. Ubiquitinated at Lys-326 in a FBXL19-mediated manner; leading to proteasomal degradation. Ubiquitination by TRAF6 via 'Lys-27'-linked polyubiquitination and deubiquitination by USP38 serves as a critical regulatory mechanism for fine-tuning IL1RL1-mediated inflammatory response. In terms of tissue distribution, predominantly expressed in hematopoietic tissues, and in macrophage, erythroid, epithelial and fibroblast cell lines. Isoform A is expressed in brain astrocytes and microglia. Isoform B is expressed in brain endothelial cells.

It localises to the cell membrane. The protein resides in the secreted. The enzyme catalyses NAD(+) + H2O = ADP-D-ribose + nicotinamide + H(+). Receptor for interleukin-33 (IL-33) which plays crucial roles in innate and adaptive immunity, contributing to tissue homeostasis and responses to environmental stresses together with coreceptor IL1RAP. Its stimulation recruits MYD88, IRAK1, IRAK4, and TRAF6, followed by phosphorylation of MAPK3/ERK1 and/or MAPK1/ERK2, MAPK14, and MAPK8. Possibly involved in helper T-cell function. Upon tissue injury, induces UCP2-dependent mitochondrial rewiring that attenuates the generation of reactive oxygen species and preserves the integrity of Krebs cycle required for persistent production of itaconate and subsequent GATA3-dependent differentiation of inflammation-resolving alternatively activated macrophages. Functionally, inhibits IL-33 signaling. The polypeptide is Interleukin-1 receptor-like 1 (Il1rl1) (Mus musculus (Mouse)).